Consider the following 321-residue polypeptide: MKLAGLKSIENAHEDSVWAATWVPATEDRPALLLTGSLDETVKLWRPDELDLVRTNTGHSLGVAALAAHPSGIIAASSSIDSFVRVFDVDTNATIAVLEAPPSEVWGMQFEPKGTILAVAGGSSASVKLWDTASWRLISTLSIPRPDAPKPSDKTSSKKFVLSVAWSPNGKRLACGSMDGTICVFDVDRSKLLHQLEGHNMPVRSLVFSPVDPRVLFSGSDDGHVNMHDAEGKTLLGSMSGHTSWVLSVDASPDGGAIATGSSDRTVRLWDLKMRAAIQTMSNHNDQVWSVAFRPPGGTGVRAGRLASVSDDKSVSLYDYS.

WD repeat units follow at residues 12-55, 58-97, 100-140, 156-195, 198-238, 241-280, and 283-319; these read AHED…LVRT, GHSLGVAALAAHPSGIIAASSSIDSFVRVFDVDTNATIAV, APPS…LIST, SSKKFVLSVAWSPNGKRLACGSMDGTICVFDVDRSKLLHQ, GHNM…LLGS, GHTSWVLSVDASPDGGAIATGSSDRTVRLWDLKMRAAIQT, and NHNDQVWSVAFRPPGGTGVRAGRLASVSDDKSVSLYD.

Component of the nuclear PAF1 complex (PAF1C), which consists of VIP2/ELF7/PAF1, VIP3/SKI8/WDR61, VIP4/LEO1, VIP5/RTF1, VIP6/ELF8/CTR9 and CDC73. Component of the cytoplasmic SKI complex, which consists of SKI2, SKI3 and VIP3/SKI8. Interacts with VIP4 and VIP6.

It localises to the nucleus. Its subcellular location is the cytoplasm. Component of the PAF1 complex (PAF1C) which is involved in histone modifications such as methylation on histone H3 'Lys-4' (H3K4me3). Involved in regulation of flowering time. Required for the expression of the flowering repressor and MADS box gene FLC. Required for histone H3 trimethylation on 'Lys-4' (H3K4me3) and histone dimethylation on 'Lys-36' (H3K36me2) at the FLC locus. Prevents trimethylation on 'Lys-27' (H3K27me3) at the same locus. Not required for meiotic recombination or progression. Component of the SKI complex which is thought to be involved in exosome-mediated RNA decay and associates with transcriptionally active genes in a manner dependent on PAF1 complex (PAF1C). Required for proper progression of cell differentiation process. The chain is WD repeat-containing protein VIP3 from Arabidopsis thaliana (Mouse-ear cress).